A 368-amino-acid chain; its full sequence is Phospho-N-acetylmuramoyl-pentapeptide-transferase (368 aa).

A run of 10 helical transmembrane segments spans residues 32 to 52, 79 to 99, 102 to 122, 140 to 160, 176 to 196, 207 to 227, 247 to 267, 271 to 291, 296 to 316, and 345 to 365; these read TGGA…WIID, TPTM…VLWA, LNPY…IGFY, TRLL…IRLG, VVVD…VGAG, GLAI…AYLA, LAVL…FNAP, IFMG…IAVA, IVLA…IVQV, and QIVI…LSTL.

Belongs to the glycosyltransferase 4 family. MraY subfamily. The cofactor is Mg(2+).

It is found in the cell inner membrane. The catalysed reaction is UDP-N-acetyl-alpha-D-muramoyl-L-alanyl-gamma-D-glutamyl-meso-2,6-diaminopimeloyl-D-alanyl-D-alanine + di-trans,octa-cis-undecaprenyl phosphate = di-trans,octa-cis-undecaprenyl diphospho-N-acetyl-alpha-D-muramoyl-L-alanyl-D-glutamyl-meso-2,6-diaminopimeloyl-D-alanyl-D-alanine + UMP. It functions in the pathway cell wall biogenesis; peptidoglycan biosynthesis. Its function is as follows. Catalyzes the initial step of the lipid cycle reactions in the biosynthesis of the cell wall peptidoglycan: transfers peptidoglycan precursor phospho-MurNAc-pentapeptide from UDP-MurNAc-pentapeptide onto the lipid carrier undecaprenyl phosphate, yielding undecaprenyl-pyrophosphoryl-MurNAc-pentapeptide, known as lipid I. This is Phospho-N-acetylmuramoyl-pentapeptide-transferase from Nitrobacter hamburgensis (strain DSM 10229 / NCIMB 13809 / X14).